We begin with the raw amino-acid sequence, 431 residues long: Putative transcription factor R429 (431 aa).

A coiled-coil region spans residues 28–95 (NKFENMSKAL…SIENCSESLD (68 aa)). A disordered region spans residues 142–187 (SQQENSSESNNDIVKNGTGGSTSKRKKIQPSNRCSGSKTGKVTETK). Over residues 143-152 (QQENSSESNN) the composition is skewed to low complexity. The span at 170 to 181 (QPSNRCSGSKTG) shows a compositional bias: polar residues. The segment at 218 to 241 (CSVPDCDGEKILNQNDGYMVCKKC) is a zinc-finger region.

Belongs to the nucleo-cytoplasmic large DNA viruses (NCLDVs) VLTF-3 family.

Putative transcription factor. The chain is Putative transcription factor R429 from Acanthamoeba polyphaga (Amoeba).